An 844-amino-acid polypeptide reads, in one-letter code: SWI/SNF-related matrix-associated actin-dependent regulator of chromatin subfamily A containing DEAD/H box 1 homolog (844 aa).

Positions 1–23 are enriched in low complexity; sequence MSDSTVAASASASASSSAKSSLS. Disordered stretches follow at residues 1-75 and 121-180; these read MSDS…TKLE and NCKP…STKM. The segment covering 30-42 has biased composition (polar residues); that stretch reads INKNASSVVASPS. Residues 301-471 enclose the Helicase ATP-binding domain; the sequence is TVMHKQEMNG…ISLLCFVMPK (171 aa). 314 to 321 is an ATP binding site; the sequence is DEMGLGKT. Residues 422–425 carry the DEGH box motif; that stretch reads DEAH. One can recognise a Helicase C-terminal domain in the interval 656-818; the sequence is YLDTLLPKLK…EQRCVVKLLT (163 aa). 3 positions are modified to phosphoserine: serine 834, serine 838, and serine 841.

This sequence belongs to the SNF2/RAD54 helicase family.

The protein resides in the nucleus. It catalyses the reaction ATP + H2O = ADP + phosphate + H(+). Functionally, DNA helicase that possesses intrinsic ATP-dependent nucleosome-remodeling activity and is both required for DNA repair and heterochromatin organization. Promotes DNA end resection of double-strand breaks (DSBs) following DNA damage: probably acts by weakening histone DNA interactions in nucleosomes flanking DSBs. This chain is SWI/SNF-related matrix-associated actin-dependent regulator of chromatin subfamily A containing DEAD/H box 1 homolog (Etl1), found in Drosophila melanogaster (Fruit fly).